A 453-amino-acid chain; its full sequence is Kynureninase (453 aa).

Pyridoxal 5'-phosphate-binding positions include L114, T115, 142 to 145 (FPSD), D232, H235, and Y257. K258 is subject to N6-(pyridoxal phosphate)lysine. Residue W286 coordinates pyridoxal 5'-phosphate.

This sequence belongs to the kynureninase family. As to quaternary structure, homodimer. Pyridoxal 5'-phosphate serves as cofactor.

Its subcellular location is the cytoplasm. The enzyme catalyses L-kynurenine + H2O = anthranilate + L-alanine + H(+). It catalyses the reaction 3-hydroxy-L-kynurenine + H2O = 3-hydroxyanthranilate + L-alanine + H(+). Its pathway is amino-acid degradation; L-kynurenine degradation; L-alanine and anthranilate from L-kynurenine: step 1/1. It participates in cofactor biosynthesis; NAD(+) biosynthesis; quinolinate from L-kynurenine: step 2/3. Catalyzes the cleavage of L-kynurenine (L-Kyn) and L-3-hydroxykynurenine (L-3OHKyn) into anthranilic acid (AA) and 3-hydroxyanthranilic acid (3-OHAA), respectively. This chain is Kynureninase, found in Cryptococcus neoformans var. neoformans serotype D (strain B-3501A) (Filobasidiella neoformans).